The primary structure comprises 78 residues: D-alanyl carrier protein (78 aa).

The 78-residue stretch at 1–78 folds into the Carrier domain; it reads MEFREQVLDL…KIVEALEELK (78 aa). O-(pantetheine 4'-phosphoryl)serine is present on Ser-36.

Belongs to the DltC family. In terms of processing, 4'-phosphopantetheine is transferred from CoA to a specific serine of apo-DCP.

It is found in the cytoplasm. Its pathway is cell wall biogenesis; lipoteichoic acid biosynthesis. Carrier protein involved in the D-alanylation of lipoteichoic acid (LTA). The loading of thioester-linked D-alanine onto DltC is catalyzed by D-alanine--D-alanyl carrier protein ligase DltA. The DltC-carried D-alanyl group is further transferred to cell membrane phosphatidylglycerol (PG) by forming an ester bond, probably catalyzed by DltD. D-alanylation of LTA plays an important role in modulating the properties of the cell wall in Gram-positive bacteria, influencing the net charge of the cell wall. The protein is D-alanyl carrier protein of Staphylococcus carnosus (strain TM300).